The primary structure comprises 261 residues: Cathepsin G (261 aa).

The N-terminal stretch at methionine 1–alanine 18 is a signal peptide. A propeptide spans glycine 19–lysine 20 (activation peptide). The important for antimicrobial activity stretch occupies residues isoleucine 21 to arginine 25. A Peptidase S1 domain is found at isoleucine 21 to arginine 243. An intrachain disulfide couples cysteine 49 to cysteine 65. Histidine 64 functions as the Charge relay system in the catalytic mechanism. Asparagine 71 carries N-linked (GlcNAc...) asparagine glycosylation. The important for antimicrobial activity stretch occupies residues histidine 97–leucine 111. Aspartate 108 serves as the catalytic Charge relay system. 2 cysteine pairs are disulfide-bonded: cysteine 142–cysteine 207 and cysteine 172–cysteine 186. Serine 201 serves as the catalytic Charge relay system.

The protein belongs to the peptidase S1 family. In terms of tissue distribution, in adult, detected only in bone marrow where expression is restricted to a small population of early myeloid cells.

Its subcellular location is the cell membrane. It is found in the cytoplasmic granule. The protein localises to the secreted. It localises to the cytoplasm. The protein resides in the cytosol. Its subcellular location is the lysosome. It is found in the nucleus. The enzyme catalyses Specificity similar to chymotrypsin C.. With respect to regulation, inhibited by chymostatin, phenylmethanesulfonyl fluoride and diisopropyl fluorophosphate. In terms of biological role, serine protease with trypsin- and chymotrypsin-like specificity. Also displays antibacterial activity against Gram-negative and Gram-positive bacteria independent of its protease activity. Prefers Phe and Tyr residues in the P1 position of substrates but also cleaves efficiently after Trp and Leu. Shows a preference for negatively charged amino acids in the P2' position and for aliphatic amino acids both upstream and downstream of the cleavage site. Required for recruitment and activation of platelets which is mediated by the F2RL3/PAR4 platelet receptor. Binds reversibly to and stimulates B cells and CD4(+) and CD8(+) T cells. Also binds reversibly to natural killer (NK) cells and enhances NK cell cytotoxicity through its protease activity. Cleaves complement C3. Cleaves vimentin. Cleaves thrombin receptor F2R/PAR1. Cleaves the synovial mucin-type protein PRG4/lubricin. Cleaves and activates IL36G which promotes expression of chemokines CXCL1 and CXLC8 in keratinocytes. Cleaves IL33 into mature forms which have greater activity than the unprocessed form. Cleaves coagulation factor F8 to produce a partially activated form. Also cleaves and activates coagulation factor F10. Cleaves leukocyte cell surface protein SPN/CD43 to release its extracellular domain and trigger its intramembrane proteolysis by gamma-secretase, releasing the CD43 cytoplasmic tail chain (CD43-ct) which translocates to the nucleus. During apoptosis, cleaves SMARCA2/BRM to produce a 160 kDa cleavage product which localizes to the cytosol. Cleaves MBP in B cell lysosomes at '221-Phe-|-Lys-222', degrading the major immunogenic MBP epitope and preventing the activation of MBP-specific autoreactive T cells. Cleaves annexin ANXA1 and antimicrobial peptide CAMP to produce peptides which act on neutrophil N-formyl peptide receptors to enhance the release of CXCL2. Acts as a ligand for the N-formyl peptide receptor FPR1, enhancing phagocyte chemotaxis. Has antibacterial activity against the Gram-negative bacteria N.gonorrhoeae and P.aeruginosa. Likely to act against N.gonorrhoeae by interacting with N.gonorrhoeae penA/PBP2. Exhibits potent antimicrobial activity against the Gram-positive bacterium L.monocytogenes. Has antibacterial activity against the Gram-positive bacterium S.aureus and degrades S.aureus biofilms, allowing polymorphonuclear leukocytes to penetrate the biofilm and phagocytose bacteria. Has antibacterial activity against M.tuberculosis. Induces platelet aggregation which is strongly potentiated in the presence of ELANE. The polypeptide is Cathepsin G (Ctsg) (Mus musculus (Mouse)).